Here is a 111-residue protein sequence, read N- to C-terminus: Large ribosomal subunit protein uL22 (111 aa).

The protein belongs to the universal ribosomal protein uL22 family. In terms of assembly, part of the 50S ribosomal subunit.

In terms of biological role, this protein binds specifically to 23S rRNA; its binding is stimulated by other ribosomal proteins, e.g. L4, L17, and L20. It is important during the early stages of 50S assembly. It makes multiple contacts with different domains of the 23S rRNA in the assembled 50S subunit and ribosome. The globular domain of the protein is located near the polypeptide exit tunnel on the outside of the subunit, while an extended beta-hairpin is found that lines the wall of the exit tunnel in the center of the 70S ribosome. This chain is Large ribosomal subunit protein uL22, found in Stenotrophomonas maltophilia (strain R551-3).